We begin with the raw amino-acid sequence, 937 residues long: AP-2 complex subunit beta (937 aa).

Threonine 2 bears the N-acetylthreonine mark. Serine 4 carries the post-translational modification Phosphoserine. Lysine 265 carries the post-translational modification N6-acetyllysine. The segment at 593–617 (LPIHHGSTDAGDSPVGTTTTTNLEQ) is disordered. Positions 607-617 (VGTTTTTNLEQ) are enriched in polar residues. Phosphotyrosine is present on residues tyrosine 737 and tyrosine 928.

Belongs to the adaptor complexes large subunit family. Adaptor protein complex 2 (AP-2) is a heterotetramer composed of two large adaptins (alpha-type subunit AP2A1 or AP2A2 and beta-type subunit AP2B1), a medium adaptin (mu-type subunit AP2M1) and a small adaptin (sigma-type subunit AP2S1). Interacts with EPN1. Interacts with EPS15; clathrin competes with EPS15. Interacts with SNAP91; clathrin competes with SNAP91. Interacts with CLTC; clathrin competes with EPS15, SNAP91 and PIP5K1C. Interacts with LDLRAP1. Interacts with AMPH and BIN1. Interacts with ARF6 (GDP-bound). Interacts (dephosphorylated at Tyr-737) with ARRB1; phosphorylation of AP2B1 at Tyr-737 disrupts the interaction. Interacts with SLC2A8. Interacts with SCYL1 and SCYL2. Interacts with TGFBR1 and TGFBR2. Interacts with PIP5K1C; clathrin competes with PIP5K1C. Interacts with DENND1B. Interacts with FCHO1. Interacts with RFTN1. Interacts with KIAA1107. Together with AP2A1 or AP2A2 and AP2M1, it interacts with ADAM10; this interaction facilitates ADAM10 endocytosis from the plasma membrane during long-term potentiation in hippocampal neurons. In terms of tissue distribution, expressed in the brain (at protein level).

The protein resides in the cell membrane. The protein localises to the membrane. Its subcellular location is the coated pit. Its function is as follows. Component of the adaptor protein complex 2 (AP-2). Adaptor protein complexes function in protein transport via transport vesicles in different membrane traffic pathways. Adaptor protein complexes are vesicle coat components and appear to be involved in cargo selection and vesicle formation. AP-2 is involved in clathrin-dependent endocytosis in which cargo proteins are incorporated into vesicles surrounded by clathrin (clathrin-coated vesicles, CCVs) which are destined for fusion with the early endosome. The clathrin lattice serves as a mechanical scaffold but is itself unable to bind directly to membrane components. Clathrin-associated adaptor protein (AP) complexes which can bind directly to both the clathrin lattice and to the lipid and protein components of membranes are considered to be the major clathrin adaptors contributing the CCV formation. AP-2 also serves as a cargo receptor to selectively sort the membrane proteins involved in receptor-mediated endocytosis. AP-2 seems to play a role in the recycling of synaptic vesicle membranes from the presynaptic surface. AP-2 recognizes Y-X-X-[FILMV] (Y-X-X-Phi) and [ED]-X-X-X-L-[LI] endocytosis signal motifs within the cytosolic tails of transmembrane cargo molecules. AP-2 may also play a role in maintaining normal post-endocytic trafficking through the ARF6-regulated, non-clathrin pathway. During long-term potentiation in hippocampal neurons, AP-2 is responsible for the endocytosis of ADAM10. The AP-2 beta subunit acts via its C-terminal appendage domain as a scaffolding platform for endocytic accessory proteins; at least some clathrin-associated sorting proteins (CLASPs) are recognized by their [DE]-X(1,2)-F-X-X-[FL]-X-X-X-R motif. The AP-2 beta subunit binds to clathrin heavy chain, promoting clathrin lattice assembly; clathrin displaces at least some CLASPs from AP2B1 which probably then can be positioned for further coat assembly. This Mus musculus (Mouse) protein is AP-2 complex subunit beta (Ap2b1).